Reading from the N-terminus, the 60-residue chain is Large ribosomal subunit protein uL30 (60 aa).

The protein belongs to the universal ribosomal protein uL30 family. Part of the 50S ribosomal subunit.

The polypeptide is Large ribosomal subunit protein uL30 (Finegoldia magna (strain ATCC 29328 / DSM 20472 / WAL 2508) (Peptostreptococcus magnus)).